Reading from the N-terminus, the 300-residue chain is Ribosomal protein L11 methyltransferase (300 aa).

T147, G168, D190, and N236 together coordinate S-adenosyl-L-methionine.

The protein belongs to the methyltransferase superfamily. PrmA family.

Its subcellular location is the cytoplasm. The catalysed reaction is L-lysyl-[protein] + 3 S-adenosyl-L-methionine = N(6),N(6),N(6)-trimethyl-L-lysyl-[protein] + 3 S-adenosyl-L-homocysteine + 3 H(+). In terms of biological role, methylates ribosomal protein L11. This is Ribosomal protein L11 methyltransferase from Leptospira interrogans serogroup Icterohaemorrhagiae serovar Lai (strain 56601).